The following is a 100-amino-acid chain: Omega toxin Ap2 (100 aa).

The first 22 residues, 1 to 22 (MNTTQVILFAVVLVLTVTVGQA), serve as a signal peptide directing secretion. A propeptide spanning residues 23-57 (DEDSAETSLLRKLEEAEASMFGQYLEESKNSPEQR) is cleaved from the precursor. Cystine bridges form between Cys58-Cys74, Cys65-Cys79, and Cys73-Cys94. A Serine amide modification is found at Ser99.

The protein belongs to the neurotoxin 14 (magi-1) family. 08 (Ltx-4) subfamily. As to expression, expressed by the venom duct.

It localises to the secreted. Inhibits 31.17% of Cav2.1/CACNA1A current at 1 uM concentration. This chain is Omega toxin Ap2, found in Acanthoscurria paulensis (Brazilian giant black tarantula spider).